We begin with the raw amino-acid sequence, 259 residues long: Insulin-like growth factor-binding protein 1 (259 aa).

Positions 1–25 (MSEVPVARVWLVLLLLTVQVGVTAG) are cleaved as a signal peptide. The IGFBP N-terminal domain occupies 26–107 (APWQCAPCSA…TRGQGACVQE (82 aa)). 6 cysteine pairs are disulfide-bonded: C30–C57, C33–C59, C41–C60, C48–C63, C71–C84, and C78–C104. Phosphoserine; by FAM20C is present on S45. S120, S123, S126, and S144 each carry phosphoserine. Residue S156 is modified to Phosphoserine; by FAM20C. The residue at position 157 (T157) is a Phosphothreonine; by FAM20C. Y158 bears the Phosphotyrosine mark. The Thyroglobulin type-1 domain maps to 173 to 251 (KEPCRIELYR…SPEIRGDPNC (79 aa)). 3 disulfides stabilise this stretch: C176/C206, C217/C228, and C230/C251. T193 carries the phosphothreonine; by FAM20C modification. Phosphoserine; by FAM20C is present on residues S194 and S199. S242 carries the post-translational modification Phosphoserine; by FAM20C. The short motif at 246-248 (RGD) is the Cell attachment site element.

In terms of assembly, binds equally well IGF1 and IGF2. Interacts with integrin ITGA5:ITGB1. Interacts with VHL; this interaction inhibits HIF1A degradation. In terms of processing, phosphorylated; probably by casein kinase II. Phosphorylation alters the affinity of the protein for IGFs. In amniotic fluid, the unmodified protein is the most abundant form, while mono-, bi-, tri- and tetraphosphorylated forms are present in decreasing amounts. The phosphorylation state may influence the propensity to proteolysis.

Its subcellular location is the secreted. Multifunctional protein that plays a critical role in regulating the availability of IGFs such as IGF1 and IGF2 to their receptors and thereby regulates IGF-mediated cellular processes including cell migration, proliferation, differentiation or apoptosis in a cell-type specific manner. Also plays a positive role in cell migration by interacting with integrin ITGA5:ITGB1 through its RGD motif. Mechanistically, binding to integrins leads to activation of focal adhesion kinase/PTK2 and stimulation of the mitogen-activated protein kinase (MAPK) pathway. Regulates cardiomyocyte apoptosis by suppressing HIF-1alpha/HIF1A ubiquitination and subsequent degradation. This chain is Insulin-like growth factor-binding protein 1 (IGFBP1), found in Homo sapiens (Human).